Here is a 677-residue protein sequence, read N- to C-terminus: Membrane-associated tyrosine- and threonine-specific cdc2-inhibitory kinase wee-1.3 (677 aa).

Over residues 1-22 (MDDTEGNSSMDSIRNGQSSPLP) the composition is skewed to polar residues. The segment at 1-30 (MDDTEGNSSMDSIRNGQSSPLPQVTPRLPQ) is disordered. The Protein kinase domain occupies 108-355 (FQIDEIIGRG…SRDLLDHPVI (248 aa)). Residues 114 to 122 (IGRGSFGEV) and Lys137 contribute to the ATP site. Residue Asp228 is the Proton acceptor of the active site. Positions 233 and 246 each coordinate Mg(2+). Disordered regions lie at residues 478 to 526 (FDND…GTPR) and 632 to 677 (EPSN…GDEV). The segment covering 489 to 499 (ATCSSSNSSAI) has biased composition (polar residues). The span at 638-652 (TVDHHTILEQSESPR) shows a compositional bias: basic and acidic residues.

This sequence belongs to the protein kinase superfamily. Ser/Thr protein kinase family. WEE1 subfamily.

It is found in the golgi apparatus membrane. The protein localises to the cytoplasm. It carries out the reaction L-seryl-[protein] + ATP = O-phospho-L-seryl-[protein] + ADP + H(+). The enzyme catalyses L-threonyl-[protein] + ATP = O-phospho-L-threonyl-[protein] + ADP + H(+). In terms of biological role, acts as a negative regulator of entry into mitosis (G2 to M transition) by phosphorylation of the CDK1 kinase during oocyte maturation. Required for oocyte maturation, embryonic development, germline proliferation and initiation of meiosis during spermatogenesis. Required for chromosome structure during mitosis and negative regulation of nuclear envelope breakdown. The sequence is that of Membrane-associated tyrosine- and threonine-specific cdc2-inhibitory kinase wee-1.3 (wee-1.3) from Caenorhabditis elegans.